The following is a 137-amino-acid chain: Nucleoside diphosphate kinase (137 aa).

ATP-binding residues include lysine 9, phenylalanine 57, arginine 85, threonine 91, arginine 102, and asparagine 112. The active-site Pros-phosphohistidine intermediate is histidine 115.

This sequence belongs to the NDK family. Homotetramer. It depends on Mg(2+) as a cofactor.

The protein resides in the cytoplasm. The catalysed reaction is a 2'-deoxyribonucleoside 5'-diphosphate + ATP = a 2'-deoxyribonucleoside 5'-triphosphate + ADP. The enzyme catalyses a ribonucleoside 5'-diphosphate + ATP = a ribonucleoside 5'-triphosphate + ADP. Its function is as follows. Major role in the synthesis of nucleoside triphosphates other than ATP. The ATP gamma phosphate is transferred to the NDP beta phosphate via a ping-pong mechanism, using a phosphorylated active-site intermediate. This chain is Nucleoside diphosphate kinase, found in Aliarcobacter butzleri (strain RM4018) (Arcobacter butzleri).